The sequence spans 351 residues: Phospho-N-acetylmuramoyl-pentapeptide-transferase (351 aa).

10 helical membrane-spanning segments follow: residues 17–37, 61–83, 88–105, 130–150, 158–178, 190–210, 230–250, 254–274, 279–299, and 328–348; these read TAYA…FIIS, MGIP…FFWI, IYFL…CLGF, ILFS…HVSI, SLKL…LISA, GLAI…AYLT, LVIF…FNAY, IMMG…VALI, ILFA…IIQV, and QVVI…LSTI.

This sequence belongs to the glycosyltransferase 4 family. MraY subfamily. Requires Mg(2+) as cofactor.

The protein resides in the cell inner membrane. The catalysed reaction is UDP-N-acetyl-alpha-D-muramoyl-L-alanyl-gamma-D-glutamyl-meso-2,6-diaminopimeloyl-D-alanyl-D-alanine + di-trans,octa-cis-undecaprenyl phosphate = di-trans,octa-cis-undecaprenyl diphospho-N-acetyl-alpha-D-muramoyl-L-alanyl-D-glutamyl-meso-2,6-diaminopimeloyl-D-alanyl-D-alanine + UMP. Its pathway is cell wall biogenesis; peptidoglycan biosynthesis. Catalyzes the initial step of the lipid cycle reactions in the biosynthesis of the cell wall peptidoglycan: transfers peptidoglycan precursor phospho-MurNAc-pentapeptide from UDP-MurNAc-pentapeptide onto the lipid carrier undecaprenyl phosphate, yielding undecaprenyl-pyrophosphoryl-MurNAc-pentapeptide, known as lipid I. The chain is Phospho-N-acetylmuramoyl-pentapeptide-transferase from Borrelia duttonii (strain Ly).